Here is a 663-residue protein sequence, read N- to C-terminus: MYSTVFYTSVHPSTSAFSRKQLPLLISKDFPTELYHSLPCSRSLENGQIKKVKGVVKATIAEAPATIPPTDLKKVPQKKLKVLVAGGGIGGLVFALAAKKRGFDVLVFERDLSAIRGEGQYRGPIQIQSNALAALEAIDMDVAEDIMNAGCITGQRINGLVDGVSGNWYCKFDTFTPAVERGLPVTRVISRMTLQQNLARAVGEDIIMNESNVVNFEDDGEKVTVTLEDGQQYTGDLLVGADGIRSKVRTNLFGPSDVTYSGYTCYTGIADFVPADIETVGYRVFLGHKQYFVSSDVGGGKMQWYAFHNEPAGGVDDPNGKKARLLKIFEGWCDNVIDLLVATDEDAILRRDIYDRPPTFSWGKGRVTLLGDSVHAMQPNLGQGGCMAIEDSYQLALELDKALSRSAESGTPVDIISSLRSYESSRKLRVGVIHGLARMAAIMASTYKAYLGVGLGPLSFLTKFRIPHPGRVGGRFFIDLGMPLMLSWVLGGNGEKLEGRIQHCRLSEKANDQLRNWFEDDDALERATDAEWLLLPAGNSNAALETLVLSRDENMPCNIGSVSHANIPGKSVVIPLPQVSEMHARISYKGGAFFVTDLRSEHGTWITDNEGRRYRASPNFPTRFHPSDIIEFGSDKKAAFRVKVMKFPPKTAAKEERQAVGAA.

The N-terminal 50 residues, 1–50 (MYSTVFYTSVHPSTSAFSRKQLPLLISKDFPTELYHSLPCSRSLENGQIK), are a transit peptide targeting the chloroplast. Residues 81-109 (KVLV…LVFE) and 359-372 (TFSW…LLGD) each bind FAD. An FHA domain is found at 547-611 (LVLSRDENMP…HGTWITDNEG (65 aa)).

The cofactor is FAD. In terms of tissue distribution, higher expression in leaves than in roots.

Its subcellular location is the plastid. The protein localises to the chloroplast membrane. It is found in the chloroplast thylakoid membrane. It catalyses the reaction all-trans-zeaxanthin + 4 reduced [2Fe-2S]-[ferredoxin] + 2 O2 + 4 H(+) = all-trans-violaxanthin + 4 oxidized [2Fe-2S]-[ferredoxin] + 2 H2O. It functions in the pathway plant hormone biosynthesis; abscisate biosynthesis. Converts zeaxanthin into antheraxanthin and subsequently violaxanthin. Involved in the epoxidation of zeaxanthin. Plays an important role in resistance to stresses, seed development and dormancy. The chain is Zeaxanthin epoxidase, chloroplastic (ABA2) from Nicotiana plumbaginifolia (Leadwort-leaved tobacco).